Consider the following 287-residue polypeptide: Protein REVEILLE 2 (287 aa).

Residues 31-85 form the HTH myb-type domain; it reads TITKQREKWTEAEHEKFVEALKLYGRAWRRIEEHVGTKTAVQIRSHAQKFFTKVA. The H-T-H motif DNA-binding region spans 58-81; the sequence is WRRIEEHVGTKTAVQIRSHAQKFF. The disordered stretch occupies residues 134-177; the sequence is QDEDNRSPTSVLSAHGSDGLGSIGSNSPNSSSAELSSHTEESLS. Over residues 156 to 169 the composition is skewed to low complexity; that stretch reads IGSNSPNSSSAELS.

The protein resides in the nucleus. In terms of biological role, positive regulator for cold-responsive gene expression and cold tolerance. Part of a regulatory feedback loop that controls a subset of the circadian outputs and modulates the central oscillator. Negatively self-regulates its own expression. This is Protein REVEILLE 2 (RVE2) from Arabidopsis thaliana (Mouse-ear cress).